The primary structure comprises 126 residues: Glycine cleavage system H protein (126 aa).

A Lipoyl-binding domain is found at 22-104 (VVFIGITDYA…YGAGWIIKVK (83 aa)). At Lys-63 the chain carries N6-lipoyllysine.

Belongs to the GcvH family. The glycine cleavage system is composed of four proteins: P, T, L and H. Requires (R)-lipoate as cofactor.

In terms of biological role, the glycine cleavage system catalyzes the degradation of glycine. The H protein shuttles the methylamine group of glycine from the P protein to the T protein. The sequence is that of Glycine cleavage system H protein from Porphyromonas gingivalis (strain ATCC 33277 / DSM 20709 / CIP 103683 / JCM 12257 / NCTC 11834 / 2561).